A 295-amino-acid polypeptide reads, in one-letter code: UDP-N-acetylenolpyruvoylglucosamine reductase (295 aa).

The 165-residue stretch at 24 to 188 (KVGGNAEIFF…LKVIFKINKG (165 aa)) folds into the FAD-binding PCMH-type domain. Residue Arg-168 is part of the active site. Ser-217 functions as the Proton donor in the catalytic mechanism. The active site involves Glu-287.

Belongs to the MurB family. Requires FAD as cofactor.

It is found in the cytoplasm. It catalyses the reaction UDP-N-acetyl-alpha-D-muramate + NADP(+) = UDP-N-acetyl-3-O-(1-carboxyvinyl)-alpha-D-glucosamine + NADPH + H(+). Its pathway is cell wall biogenesis; peptidoglycan biosynthesis. Its function is as follows. Cell wall formation. This Rickettsia rickettsii (strain Iowa) protein is UDP-N-acetylenolpyruvoylglucosamine reductase.